The following is a 222-amino-acid chain: Large ribosomal subunit protein mL64 (222 aa).

Disordered regions lie at residues 21 to 47 and 186 to 222; these read RSRS…NLLT and QRKR…EPSS. Residues 98–207 are a coiled coil; it reads TMQESLRLQQ…KKEARIAAMA (110 aa). The short motif at 184–200 is the Nuclear localization signal element; sequence KQQRKRLKEERQRQKKE. The segment covering 186 to 202 has biased composition (basic and acidic residues); the sequence is QRKRLKEERQRQKKEAR. Over residues 203–215 the composition is skewed to low complexity; it reads IAAMASAEAQDSA.

Belongs to the mitochondrion-specific ribosomal protein mL64 family. In terms of assembly, component of the mitochondrial ribosome large subunit (39S) which comprises a 16S rRNA and about 50 distinct proteins. Interacts with GADD45A, GADD45B and GADD45G. Interacts with NR4A1 via the NR4A1 AB domain. Interacts with ATAD3A and ATAD3B.

Its subcellular location is the mitochondrion. The protein localises to the nucleus. In terms of biological role, acts as a negative regulator of G1 to S cell cycle phase progression by inhibiting cyclin-dependent kinases. Inhibitory effects are additive with GADD45 proteins but also occur in the absence of GADD45 proteins. Acts as a repressor of the orphan nuclear receptor NR4A1 by inhibiting AB domain-mediated transcriptional activity. May be involved in the hormone-mediated regulation of NR4A1 transcriptional activity. May play a role in mitochondrial protein synthesis. The chain is Large ribosomal subunit protein mL64 (Gadd45gip1) from Mus musculus (Mouse).